Here is a 123-residue protein sequence, read N- to C-terminus: Steroid Delta-isomerase (123 aa).

Tyr12 (proton donor) is an active-site residue. Asp36 (proton acceptor) is an active-site residue. Position 96 (Asp96) interacts with substrate.

In terms of assembly, homodimer.

The enzyme catalyses a 3-oxo-Delta(5)-steroid = a 3-oxo-Delta(4)-steroid. This is Steroid Delta-isomerase (ksdI) from Nocardioides simplex (Arthrobacter simplex).